The following is a 299-amino-acid chain: 33 kDa chaperonin (299 aa).

2 cysteine pairs are disulfide-bonded: Cys-239–Cys-241 and Cys-272–Cys-275.

The protein belongs to the HSP33 family. Post-translationally, under oxidizing conditions two disulfide bonds are formed involving the reactive cysteines. Under reducing conditions zinc is bound to the reactive cysteines and the protein is inactive.

The protein resides in the cytoplasm. Its function is as follows. Redox regulated molecular chaperone. Protects both thermally unfolding and oxidatively damaged proteins from irreversible aggregation. Plays an important role in the bacterial defense system toward oxidative stress. In Acaryochloris marina (strain MBIC 11017), this protein is 33 kDa chaperonin.